The following is a 641-amino-acid chain: Mediator of RNA polymerase II transcription subunit 17 (641 aa).

Positions 159–186 (RLQSFNAAADKLLKSAARLETEVASETR) form a coiled coil.

Belongs to the Mediator complex subunit 17 family. As to quaternary structure, component of the Mediator complex.

The protein localises to the nucleus. Functionally, component of the Mediator complex, a coactivator involved in the regulated transcription of nearly all RNA polymerase II-dependent genes. Mediator functions as a bridge to convey information from gene-specific regulatory proteins to the basal RNA polymerase II transcription machinery. Mediator is recruited to promoters by direct interactions with regulatory proteins and serves as a scaffold for the assembly of a functional preinitiation complex with RNA polymerase II and the general transcription factors. The sequence is that of Mediator of RNA polymerase II transcription subunit 17 (srb4) from Aspergillus clavatus (strain ATCC 1007 / CBS 513.65 / DSM 816 / NCTC 3887 / NRRL 1 / QM 1276 / 107).